Consider the following 295-residue polypeptide: Iron-sulfur cluster carrier protein (295 aa).

An ATP-binding site is contributed by 38 to 45; sequence GKGGVGKS.

It belongs to the Mrp/NBP35 ATP-binding proteins family. Homodimer.

Functionally, binds and transfers iron-sulfur (Fe-S) clusters to target apoproteins. Can hydrolyze ATP. This is Iron-sulfur cluster carrier protein from Pyrococcus furiosus (strain ATCC 43587 / DSM 3638 / JCM 8422 / Vc1).